The sequence spans 496 residues: Hexokinase-1 (496 aa).

A helical membrane pass occupies residues V4–V24. Positions G35 to A487 constitute a Hexokinase domain. The hexokinase small subdomain stretch occupies residues S90–V228. The ADP site is built by G104, T105, and N106. D-glucose contacts are provided by T194, K195, N229, and D230. The interval N229–D476 is hexokinase large subdomain. Residue T253 coordinates ADP. Residues N256, E284, and E315 each coordinate D-glucose. G441 is a binding site for ADP.

The protein belongs to the hexokinase family. In terms of assembly, interacts with RPT5B in nucleus. Interacts with RHIP1. Interacts with KING1 in mitochondria. Interacts with CLF (via SANT domain) and EZA1/SWN (via SANT domain) in nucleus. As to expression, highly expressed in flowers and siliques, at intermediate levels in roots and stems, and at lower levels in rosette and cauline leaves.

The protein resides in the mitochondrion outer membrane. It is found in the nucleus. It carries out the reaction a D-hexose + ATP = a D-hexose 6-phosphate + ADP + H(+). The catalysed reaction is D-fructose + ATP = D-fructose 6-phosphate + ADP + H(+). It catalyses the reaction D-glucose + ATP = D-glucose 6-phosphate + ADP + H(+). The protein operates within carbohydrate metabolism; hexose metabolism. It participates in carbohydrate degradation; glycolysis; D-glyceraldehyde 3-phosphate and glycerone phosphate from D-glucose: step 1/4. Functionally, fructose and glucose phosphorylating enzyme. May be involved in the phosphorylation of glucose during the export from mitochondrion to cytosol. Acts as a sugar sensor which may regulate sugar-dependent gene repression or activation. Mediates the effects of sugar on plant growth and development independently of its catalytic activity or the sugar metabolism. May regulate the execution of program cell death in plant cells. Promotes roots and leaves growth. Together with sugar, is involved in the regulation of the expression of aquaporin genes, and reduces leaf water conductance, to coordinate sugar levels with the loss of water through transpiration. Regulates cell proliferation and expansion early during leaf development. Involved in sucrose-induced leaf growth stimulation independently of GPT2. May participate to the stimulation of hypocotyl elongation under long-day (LD) conditions. Forms a nuclear complex with CLF and EZA1/SWN to target common glucose-responsive genes and regulate glucose signaling. Is required for CLF- and EZA1/SWN-mediated histone H3 trimethylation on 'Lys-27' (H3K27me3) and glucose-mediated gene repression. In Arabidopsis thaliana (Mouse-ear cress), this protein is Hexokinase-1.